The sequence spans 227 residues: uncharacterized protein (227 aa).

An N-terminal signal peptide occupies residues 1-22 (MDSVMRKSLFLLLPLVVTNAHA).

This is an uncharacterized protein from Salmonella typhi.